Here is a 363-residue protein sequence, read N- to C-terminus: Probable mannitol dehydrogenase 3 (363 aa).

7 residues coordinate Zn(2+): C51, H73, C104, C107, C110, C118, and C168.

It belongs to the zinc-containing alcohol dehydrogenase family. Zn(2+) is required as a cofactor.

The enzyme catalyses D-mannitol + NAD(+) = D-mannose + NADH + H(+). Functionally, oxidizes mannitol to mannose. Provides the initial step by which translocated mannitol is committed to central metabolism and, by regulating mannitol pool size, is important in regulating salt tolerance at the cellular level. In Stylosanthes humilis (Townsville stylo), this protein is Probable mannitol dehydrogenase 3 (CAD3).